Consider the following 522-residue polypeptide: 2-isopropylmalate synthase (522 aa).

Residues 5-267 enclose the Pyruvate carboxyltransferase domain; that stretch reads VIIFDTTLRD…ETGINAKEIH (263 aa). The Mn(2+) site is built by Asp-14, His-202, His-204, and Asn-238. A regulatory domain region spans residues 392–522; it reads QLQQLVVQSD…MQKNRELGGV (131 aa).

Belongs to the alpha-IPM synthase/homocitrate synthase family. LeuA type 1 subfamily. In terms of assembly, homodimer. Mn(2+) serves as cofactor.

It is found in the cytoplasm. It catalyses the reaction 3-methyl-2-oxobutanoate + acetyl-CoA + H2O = (2S)-2-isopropylmalate + CoA + H(+). It functions in the pathway amino-acid biosynthesis; L-leucine biosynthesis; L-leucine from 3-methyl-2-oxobutanoate: step 1/4. Functionally, catalyzes the condensation of the acetyl group of acetyl-CoA with 3-methyl-2-oxobutanoate (2-ketoisovalerate) to form 3-carboxy-3-hydroxy-4-methylpentanoate (2-isopropylmalate). This is 2-isopropylmalate synthase from Shewanella baltica (strain OS185).